The chain runs to 73 residues: Disintegrin cerastin (73 aa).

The 73-residue stretch at 1-73 folds into the Disintegrin domain; sequence EAGEECDCGT…ADCPRNGLYG (73 aa). 6 disulfides stabilise this stretch: cysteine 6/cysteine 21, cysteine 8/cysteine 16, cysteine 15/cysteine 38, cysteine 29/cysteine 35, cysteine 34/cysteine 59, and cysteine 47/cysteine 66. A Cell attachment site motif is present at residues 51 to 53; sequence RGD.

The protein belongs to the venom metalloproteinase (M12B) family. P-II subfamily. P-IIa sub-subfamily. In terms of assembly, monomer (disintegrin). In terms of tissue distribution, expressed by the venom gland.

It localises to the secreted. In terms of biological role, inhibits fibrinogen interaction with platelets. Acts by binding to alpha-IIb/beta-3 (ITGA2B/ITGB3) on the platelet surface and inhibits aggregation induced by ADP, thrombin, platelet-activating factor and collagen. This Crotalus cerastes cerastes (Mojave desert sidewinder) protein is Disintegrin cerastin.